A 500-amino-acid chain; its full sequence is Glutamate--tRNA ligase (500 aa).

The 'HIGH' region motif lies at 13-23 (PSPTGTPHVGM). The 'KMSKS' region motif lies at 258–262 (KLSKR). Lysine 261 contributes to the ATP binding site.

Belongs to the class-I aminoacyl-tRNA synthetase family. Glutamate--tRNA ligase type 1 subfamily. Monomer.

The protein resides in the cytoplasm. The enzyme catalyses tRNA(Glu) + L-glutamate + ATP = L-glutamyl-tRNA(Glu) + AMP + diphosphate. Functionally, catalyzes the attachment of glutamate to tRNA(Glu) in a two-step reaction: glutamate is first activated by ATP to form Glu-AMP and then transferred to the acceptor end of tRNA(Glu). This chain is Glutamate--tRNA ligase, found in Corynebacterium jeikeium (strain K411).